Reading from the N-terminus, the 89-residue chain is Extender of the chronological lifespan protein ecl3 (89 aa).

This sequence belongs to the ecl1 family.

It is found in the nucleus. Its function is as follows. Involved in chronological cell aging. The polypeptide is Extender of the chronological lifespan protein ecl3 (ecl3) (Schizosaccharomyces pombe (strain 972 / ATCC 24843) (Fission yeast)).